Consider the following 104-residue polypeptide: Urease subunit beta (104 aa).

This sequence belongs to the urease beta subunit family. As to quaternary structure, heterotrimer of UreA (gamma), UreB (beta) and UreC (alpha) subunits. Three heterotrimers associate to form the active enzyme.

The protein localises to the cytoplasm. The catalysed reaction is urea + 2 H2O + H(+) = hydrogencarbonate + 2 NH4(+). The protein operates within nitrogen metabolism; urea degradation; CO(2) and NH(3) from urea (urease route): step 1/1. The polypeptide is Urease subunit beta (Rhodococcus opacus (strain B4)).